The chain runs to 77 residues: Large ribosomal subunit protein bL28 (77 aa).

Belongs to the bacterial ribosomal protein bL28 family.

The polypeptide is Large ribosomal subunit protein bL28 (Dechloromonas aromatica (strain RCB)).